The sequence spans 321 residues: uncharacterized protein (321 aa).

A compositionally biased stretch (basic residues) spans 1 to 12 (MSMFLKKQKKTK). Disordered regions lie at residues 1–59 (MSMF…MRKT) and 71–289 (EDCT…GPED). Residues 50-59 (DGIKETMRKT) show a composition bias toward basic and acidic residues. A compositionally biased stretch (acidic residues) spans 99-115 (DDSDSESSEDGGEDDEE). The segment covering 156–175 (SDSSSSSSSSSDSESSSSSD) has biased composition (low complexity). The segment covering 179-189 (DGDRSTPEPDI) has biased composition (basic and acidic residues). Over residues 231–242 (EPSPLRAAAAAA) the composition is skewed to low complexity.

This is an uncharacterized protein from Equus caballus (Horse).